The chain runs to 346 residues: fMet-Leu-Phe receptor (346 aa).

Asn-1 and Asn-7 each carry an N-linked (GlcNAc...) asparagine glycan. At 1–24 the chain is on the extracellular side; sequence NSSLPTNISGGTPAVSAGYLFLDI. Residues 25–47 form a helical membrane-spanning segment; the sequence is ITYLVFAVTFVLGVLGNGLVIWV. Residues 48–58 lie on the Cytoplasmic side of the membrane; it reads AGFRMRHTVTT. Residues 59–80 traverse the membrane as a helical segment; that stretch reads ISYLNLAVADFCFTSTLPFLMV. Over 81–97 the chain is Extracellular; it reads VKVMRGHWPFGWFLCKF. Cys-95 and Cys-173 form a disulfide bridge. A helical transmembrane segment spans residues 98-118; the sequence is IFTIVDINLFGSVFLIALIAL. Topologically, residues 119–137 are cytoplasmic; sequence DRCVCVLHPVWTQNHRTVS. The helical transmembrane segment at 138 to 159 threads the bilayer; that stretch reads LAKKVIIGPWVMALLLTLPVII. At 160–202 the chain is on the extracellular side; that stretch reads RVTTVPGKTGTVACTFDFSPWTNDPVEKLKVTIAMLTVRGIIR. Residues 203-223 traverse the membrane as a helical segment; that stretch reads FIIGFSVPMSIVAVSYGLIAT. The Cytoplasmic segment spans residues 224 to 239; sequence KIHKQGLIKSSRPLRV. Residues 240 to 263 traverse the membrane as a helical segment; the sequence is LSFVVAAFFLCWSPYQVVAFIATV. The Extracellular portion of the chain corresponds to 264–282; that stretch reads RLRNILQGLSKELRIAVDA. A helical membrane pass occupies residues 283 to 302; the sequence is TSALAFFNSCLNPMLYVFMG. Topologically, residues 303–346 are cytoplasmic; it reads QDFRERLIHSLPTSLERALTEDSAQTSDTATNSTLPSAEVPLQA. A disordered region spans residues 321 to 346; sequence LTEDSAQTSDTATNSTLPSAEVPLQA. A compositionally biased stretch (polar residues) spans 324–338; that stretch reads DSAQTSDTATNSTLP.

This sequence belongs to the G-protein coupled receptor 1 family. In terms of processing, phosphorylated; which is necessary for desensitization.

Its subcellular location is the cell membrane. Functionally, high affinity receptor for N-formyl-methionyl peptides (fMLP), which are powerful neutrophil chemotactic factors. Binding of fMLP to the receptor stimulates intracellular calcium mobilization and superoxide anion release. This response is mediated via a G-protein that activates a phosphatidylinositol-calcium second messenger system. Receptor for TAFA4, mediates its effects on chemoattracting macrophages, promoting phagocytosis and increasing ROS release. Receptor for cathepsin CTSG, leading to increased phagocyte chemotaxis. This is fMet-Leu-Phe receptor (FPR1) from Macaca mulatta (Rhesus macaque).